Here is a 957-residue protein sequence, read N- to C-terminus: PE-PGRS family protein PE_PGRS3 (957 aa).

In terms of domain architecture, PE spans 4 to 94 (VIAAPEVIAA…GAYAAAEAAA (91 aa)). Over residues 893 to 925 (CRRQRRADRQRRQRRQRRQSRGHARCRRHRRAA) the composition is skewed to basic residues. The segment at 893-957 (CRRQRRADRQ…GISCSPQMMP (65 aa)) is disordered.

This sequence belongs to the mycobacterial PE family. PGRS subfamily. Post-translationally, a cleavage of the protein removes the N-terminal 120-150 residues, immediately upstream the PGRS domain. The exact position of the cleavage site could not be identified.

The protein localises to the cell outer membrane. It localises to the secreted. The protein resides in the cell wall. It is found in the cell surface. Its function is as follows. The arginine-rich C-terminal region protrudes from the mycobacterial membrane and mediates M.tuberculosis entry into host epithelial cells. May serve as a bridge between mycobacteria and host cells by interacting with specific host phospholipids and extracting them from host cells, for their direct integration or as a source of phosphate, during phases of TB pathogenesis when M.tuberculosis is short of phosphate supply. This chain is PE-PGRS family protein PE_PGRS3, found in Mycobacterium tuberculosis (strain ATCC 25618 / H37Rv).